The following is a 310-amino-acid chain: tRNA pseudouridine synthase B (310 aa).

Asp49 serves as the catalytic Nucleophile.

It belongs to the pseudouridine synthase TruB family. Type 1 subfamily.

It catalyses the reaction uridine(55) in tRNA = pseudouridine(55) in tRNA. Responsible for synthesis of pseudouridine from uracil-55 in the psi GC loop of transfer RNAs. This is tRNA pseudouridine synthase B from Sinorhizobium medicae (strain WSM419) (Ensifer medicae).